Consider the following 358-residue polypeptide: Golgi-resident adenosine 3',5'-bisphosphate 3'-phosphatase (358 aa).

Position 1 is an N-acetylmethionine (M1). At 1-12 (MAPMGIRLSPLG) the chain is on the cytoplasmic side. Residues 13 to 33 (VAVFCLLGLGVLYHLYSGFLA) traverse the membrane as a helical segment. Residues 34 to 358 (GRFSLFGLGG…KLPDLEKMGH (325 aa)) are Lumenal-facing. Residues 85–106 (RESNVLHEKSKGKTREGADDKM) are disordered. Catalysis depends on D110, which acts as the Proton acceptor. Residues E133, D174, L176, and D177 each contribute to the Mg(2+) site. T179 (proton acceptor) is an active-site residue. Positions 242 and 245 each coordinate AMP. A glycan (N-linked (GlcNAc...) asparagine) is linked at N259. G268 and K272 together coordinate AMP. D300 contributes to the Mg(2+) binding site.

This sequence belongs to the inositol monophosphatase superfamily. Requires Mg(2+) as cofactor. In terms of processing, contains N-linked glycan resistant to endoglycosydase H.

The protein localises to the golgi apparatus. The protein resides in the trans-Golgi network membrane. It carries out the reaction adenosine 3',5'-bisphosphate + H2O = AMP + phosphate. The protein operates within sulfur metabolism. Strongly inhibited by lithium. Exhibits 3'-nucleotidase activity toward adenosine 3',5'-bisphosphate (PAP), namely hydrolyzes adenosine 3',5'-bisphosphate into adenosine 5'-monophosphate (AMP) and a phosphate. May play a role in the formation of skeletal elements derived through endochondral ossification, possibly by clearing adenosine 3',5'-bisphosphate produced by Golgi sulfotransferases during glycosaminoglycan sulfation. Has no activity toward 3'-phosphoadenosine 5'-phosphosulfate (PAPS) or inositol phosphate (IP) substrates including I(1)P, I(1,4)P2, I(1,3,4)P3, I(1,4,5)P3 and I(1,3,4,5)P4. The polypeptide is Golgi-resident adenosine 3',5'-bisphosphate 3'-phosphatase (BPNT2) (Callithrix jacchus (White-tufted-ear marmoset)).